The primary structure comprises 64 residues: Small ribosomal subunit protein bS21 (64 aa).

Residues 40-64 (PPSVKRKIKSQEAQRRMRRTKRKRF) form a disordered region. Basic residues predominate over residues 55–64 (RMRRTKRKRF).

It belongs to the bacterial ribosomal protein bS21 family.

In Elusimicrobium minutum (strain Pei191), this protein is Small ribosomal subunit protein bS21.